The following is a 45-amino-acid chain: Large ribosomal subunit protein bL34 (45 aa).

Belongs to the bacterial ribosomal protein bL34 family.

The sequence is that of Large ribosomal subunit protein bL34 from Kineococcus radiotolerans (strain ATCC BAA-149 / DSM 14245 / SRS30216).